Reading from the N-terminus, the 193-residue chain is CASP-like protein 2U1 (193 aa).

Topologically, residues 1–18 are cytoplasmic; that stretch reads MAMALALGGGQDAERKVK. A helical membrane pass occupies residues 19-39; that stretch reads VAEVALRALLCGLGALAAALV. Residues 40 to 61 lie on the Extracellular side of the membrane; sequence ATDTQTRTFFSLQKKASYTDMK. Residues 62–82 form a helical membrane-spanning segment; the sequence is AMVFLVDAAAVAAGYSLLQLA. The Cytoplasmic portion of the chain corresponds to 83–113; it reads ARCCGGGAMSSGRGDGGGRGRALSWCVFSCD. Residues 114–134 form a helical membrane-spanning segment; that stretch reads QALAYVLLAAVAAALQASVVA. The Extracellular portion of the chain corresponds to 135–156; sequence KRGQPELQWMGICALYGAFCRQ. A helical transmembrane segment spans residues 157-177; it reads AGAGLATAVVAGLAAVLLAFL. Residues 178–193 are Cytoplasmic-facing; sequence SAFNLFRLYGSGGTKS.

Belongs to the Casparian strip membrane proteins (CASP) family. As to quaternary structure, homodimer and heterodimers.

The protein localises to the cell membrane. The protein is CASP-like protein 2U1 of Sorghum bicolor (Sorghum).